The chain runs to 442 residues: UDP-glycosyltransferase 79B7 (442 aa).

UDP-alpha-D-glucose contacts are provided by residues Ser260, 319–321 (VQQ), 336–344 (HCGPGTIWE), and 358–361 (LSDQ).

This sequence belongs to the UDP-glycosyltransferase family.

The chain is UDP-glycosyltransferase 79B7 (UGT79B7) from Arabidopsis thaliana (Mouse-ear cress).